Here is a 48-residue protein sequence, read N- to C-terminus: uncharacterized protein (48 aa).

The protein localises to the mitochondrion. This is an uncharacterized protein from Emericella nidulans (Aspergillus nidulans).